We begin with the raw amino-acid sequence, 398 residues long: Elongation factor Tu (398 aa).

The 198-residue stretch at 10 to 207 folds into the tr-type G domain; sequence KPHVNIGTIG…TVDEYIPEPE (198 aa). Residues 19 to 26 form a G1 region; it reads GHVDHGKT. 19–26 serves as a coordination point for GTP; the sequence is GHVDHGKT. T26 provides a ligand contact to Mg(2+). The G2 stretch occupies residues 63 to 67; sequence GITIN. A G3 region spans residues 84–87; sequence DAPG. Residues 84 to 88 and 139 to 142 each bind GTP; these read DAPGH and NKVD. Positions 139–142 are G4; that stretch reads NKVD. The tract at residues 177–179 is G5; the sequence is SAL.

Belongs to the TRAFAC class translation factor GTPase superfamily. Classic translation factor GTPase family. EF-Tu/EF-1A subfamily. Monomer.

The protein resides in the cytoplasm. The catalysed reaction is GTP + H2O = GDP + phosphate + H(+). GTP hydrolase that promotes the GTP-dependent binding of aminoacyl-tRNA to the A-site of ribosomes during protein biosynthesis. This Streptococcus agalactiae serotype Ia (strain ATCC 27591 / A909 / CDC SS700) protein is Elongation factor Tu.